Here is a 405-residue protein sequence, read N- to C-terminus: CMP-sialic acid transporter 4 (405 aa).

The Cytoplasmic segment spans residues 1-43 (MQRNGVMECSVCHSKVVAPSPRSVSRAYDKHRSKISSKYRALN). A helical membrane pass occupies residues 44–64 (FLLVSGDCILVGLQPILVFMS). Residues 65 to 74 (KVDGKFQFSP) are Lumenal-facing. A helical transmembrane segment spans residues 75 to 95 (ISVNFLTEVTKVIFAIVMLII). The Cytoplasmic portion of the chain corresponds to 96 to 121 (QSRKQKVGEKPLLSLSTFVQAARNNA). A helical transmembrane segment spans residues 122–142 (LLAVPALLYAINNYLKFIMQL). A topological domain (lumenal) is located at residue tyrosine 143. A helical membrane pass occupies residues 144 to 164 (FSPATVKMLSNLKVLVIAILL). Residues 165-171 (KFIMRRK) lie on the Cytoplasmic side of the membrane. A helical membrane pass occupies residues 172–192 (FSIIQWEALALLLIGISVNQL). The Lumenal portion of the chain corresponds to 193-203 (SSIPDGTKSFG). The helical transmembrane segment at 204–224 (LAVTTIAYIYTLIFVTVPSLA) threads the bilayer. Residues 225–244 (SVYNEYALKSQFDTSIYLQN) are Cytoplasmic-facing. Residues 245–265 (LFLYGYGAIFNFLGILGTVIF) form a helical membrane-spanning segment. The Lumenal segment spans residues 266–281 (QGPESFDILQGHSRAT). Residues 282–302 (MFLICNNAAQGILSSFFFKYA) form a helical membrane-spanning segment. At 303-322 (DTILKKYSSTVATIFTGLAS) the chain is on the cytoplasmic side. The helical transmembrane segment at 323–343 (AAFLGHTLTVNFLLGISIVFI) threads the bilayer. The Lumenal portion of the chain corresponds to 344–405 (SMHQFFSPLA…TDERKPLLPI (62 aa)). Residues 386–405 (AADDASHLTSTDERKPLLPI) are disordered. Positions 389-405 (DASHLTSTDERKPLLPI) are enriched in basic and acidic residues.

The protein belongs to the nucleotide-sugar transporter family. CMP-Sialate:CMP antiporter (TC 2.A.7.12) subfamily.

Its subcellular location is the golgi apparatus membrane. In terms of biological role, sugar transporter involved in the transport of CMP-sialic acid from the cytoplasm into the Golgi. May transport important nucleotide sugars such as CMP-Kdo (2-keto-3-deoxy-D-manno-octulosonic acid) in physiological conditions. The sequence is that of CMP-sialic acid transporter 4 from Oryza sativa subsp. indica (Rice).